A 307-amino-acid chain; its full sequence is Transaldolase (307 aa).

Lys125 functions as the Schiff-base intermediate with substrate in the catalytic mechanism.

The protein belongs to the transaldolase family. Type 1 subfamily. Homodimer.

It localises to the cytoplasm. The catalysed reaction is D-sedoheptulose 7-phosphate + D-glyceraldehyde 3-phosphate = D-erythrose 4-phosphate + beta-D-fructose 6-phosphate. It participates in carbohydrate degradation; pentose phosphate pathway; D-glyceraldehyde 3-phosphate and beta-D-fructose 6-phosphate from D-ribose 5-phosphate and D-xylulose 5-phosphate (non-oxidative stage): step 2/3. Functionally, transaldolase is important for the balance of metabolites in the pentose-phosphate pathway. This chain is Transaldolase, found in Pseudomonas aeruginosa (strain LESB58).